A 284-amino-acid polypeptide reads, in one-letter code: Tropomyosin (284 aa).

The segment at 1–38 (MEAIKKKMQAMKLEKDNAVDRAETAEQQSREAALRAEK) is disordered. A coiled-coil region spans residues 1–284 (MEAIKKKMQA…DQTFSELTGY (284 aa)). The segment covering 12–38 (KLEKDNAVDRAETAEQQSREAALRAEK) has biased composition (basic and acidic residues).

This sequence belongs to the tropomyosin family. In terms of assembly, homodimer.

In terms of biological role, tropomyosin, in association with the troponin complex, plays a central role in the calcium dependent regulation of muscle contraction. This is Tropomyosin from Rhipicephalus microplus (Cattle tick).